A 556-amino-acid chain; its full sequence is Cytochrome P450 monooxygenase polC (556 aa).

A helical transmembrane segment spans residues 17–37; that stretch reads LCFAISLLCAVAIATFLHKLY. Residue cysteine 479 participates in heme binding.

Belongs to the cytochrome P450 family. Heme is required as a cofactor.

The protein localises to the membrane. It catalyses the reaction motiol + 3 reduced [NADPH--hemoprotein reductase] + 3 O2 = 4beta-carboxyl motiol + 3 oxidized [NADPH--hemoprotein reductase] + 4 H2O + 4 H(+). It functions in the pathway secondary metabolite biosynthesis; terpenoid biosynthesis. Functionally, cytochrome P450 monooxygenase; part of the gene cluster that mediates the biosynthesis of antifungal fernane-type triterpenoid polytolypin. PolC uses motiol as a substrate and converts the methyl group at position C-4 to a carboxyl group. Within the pathway, the triterpene cyclase polA first catalyzes the cyclization of 2,3-oxidosqualene to motiol, polC converts the 4-alpha-methyl group of motiol to a carboxyl group, polB is responsible for appending a hydroxyl group at the 2-alpha position and polE is a dual functional P450, which can catalyze the formation of both the 1-beta-hydroxyl group and 10-beta-carboxyl group. This chain is Cytochrome P450 monooxygenase polC, found in Polytolypa hystricis (strain UAMH7299).